The primary structure comprises 155 residues: Ribosome-binding factor A (155 aa).

2 stretches are compositionally biased toward basic and acidic residues: residues 116–125 (ARQRDQEVAR) and 142–155 (SPHE…ADGW). A disordered region spans residues 116 to 155 (ARQRDQEVARQAEGATPAGDANPYKTSPHEGRPESEADGW).

This sequence belongs to the RbfA family. As to quaternary structure, monomer. Binds 30S ribosomal subunits, but not 50S ribosomal subunits or 70S ribosomes.

It is found in the cytoplasm. Its function is as follows. One of several proteins that assist in the late maturation steps of the functional core of the 30S ribosomal subunit. Associates with free 30S ribosomal subunits (but not with 30S subunits that are part of 70S ribosomes or polysomes). Required for efficient processing of 16S rRNA. May interact with the 5'-terminal helix region of 16S rRNA. The polypeptide is Ribosome-binding factor A (Corynebacterium kroppenstedtii (strain DSM 44385 / JCM 11950 / CIP 105744 / CCUG 35717)).